Consider the following 814-residue polypeptide: Phosphatidylinositol 3-kinase VPS34 (814 aa).

The region spanning 25-177 (LDGNLPVKKS…EKLMNKYERG (153 aa)) is the C2 PI3K-type domain. Residues 274 to 449 (DRDLKPSNIE…YSTYELLEEN (176 aa)) form the PIK helical domain. The region spanning 532-799 (VAGESSLFKS…LINESVSALF (268 aa)) is the PI3K/PI4K catalytic domain. The G-loop stretch occupies residues 538–544 (LFKSALH). Residues 668 to 676 (GIGDRHLDN) are catalytic loop. An activation loop region spans residues 687-708 (HVDFAFILGRDPKPFPPPMKLC).

It belongs to the PI3/PI4-kinase family. As to quaternary structure, interacts with VPS15. Component of a complex made of VPS38/USL1 and PI3K main subunits such as VPS15, ATG6/VPS30 and VPS34. Binds directly to VPS38/USL1.

It carries out the reaction a 1,2-diacyl-sn-glycero-3-phospho-(1D-myo-inositol) + ATP = a 1,2-diacyl-sn-glycero-3-phospho-(1D-myo-inositol-3-phosphate) + ADP + H(+). Its activity is regulated as follows. The PI3K inhibitor LY294002 affects phosphatidylinositol 3-phosphate (PI3P) levels and triggers a decrease in proline, hydrophobic and aromatic amino acids, and sugars (e.g. raffinose) accumulation in response to salt treatment correlated with lower P5CS1 expression and higher ProDH1 expression, genes involved in proline biosynthesis and catabolism, respectively. Involved in the negative regulation of proline, hydrophobic and aromatic amino acids accumulation, especially in response to salt (NaCl), either through inhibition of their synthesis and/or promotion of their catabolism. Triggers defense responses (e.g. pathogenesis related (PR1 and PR5) gene expression and hydrogen peroxide H(2)O(2) burst) to the bacterial pathogen compatible Pseudomonas syringae pv tomato DC3000 (Pst DC3000) and incompatible Pst DC3000 (avrRpt2), by regulating reactive ogygen species (ROS) production and by promoting stomatal closure. This is Phosphatidylinositol 3-kinase VPS34 from Arabidopsis thaliana (Mouse-ear cress).